The chain runs to 453 residues: Ribosomal protein uS12 methylthiotransferase RimO (453 aa).

An MTTase N-terminal domain is found at 5 to 120 (PKVGFVSLGC…VMQAVHSHLP (116 aa)). The [4Fe-4S] cluster site is built by cysteine 14, cysteine 50, cysteine 79, cysteine 151, cysteine 155, and cysteine 158. The Radical SAM core domain occupies 137-382 (LTPRHYAYLK…MEVAEEVSAN (246 aa)). A TRAM domain is found at 385 to 453 (QRKVGKTLKV…ADGHDLWGEV (69 aa)).

The protein belongs to the methylthiotransferase family. RimO subfamily. Requires [4Fe-4S] cluster as cofactor.

The protein resides in the cytoplasm. The enzyme catalyses L-aspartate(89)-[ribosomal protein uS12]-hydrogen + (sulfur carrier)-SH + AH2 + 2 S-adenosyl-L-methionine = 3-methylsulfanyl-L-aspartate(89)-[ribosomal protein uS12]-hydrogen + (sulfur carrier)-H + 5'-deoxyadenosine + L-methionine + A + S-adenosyl-L-homocysteine + 2 H(+). Its function is as follows. Catalyzes the methylthiolation of an aspartic acid residue of ribosomal protein uS12. The sequence is that of Ribosomal protein uS12 methylthiotransferase RimO from Burkholderia cenocepacia (strain HI2424).